Reading from the N-terminus, the 317-residue chain is Putative HTH-type transcriptional regulatory protein NP_1320A (317 aa).

An HTH cro/C1-type domain is found at 132 to 189; it reads LSDIRSQEDMSLGKLANELGVSRRTVSKYEDGMSASVEVAAELEEIFDRKLASPVEVL. Positions 143 to 162 form a DNA-binding region, H-T-H motif; it reads LGKLANELGVSRRTVSKYED.

In Natronomonas pharaonis (strain ATCC 35678 / DSM 2160 / CIP 103997 / JCM 8858 / NBRC 14720 / NCIMB 2260 / Gabara) (Halobacterium pharaonis), this protein is Putative HTH-type transcriptional regulatory protein NP_1320A.